We begin with the raw amino-acid sequence, 147 residues long: MKVIFLQDVKGQGKKGEVKDLSEGYVRNFLLPKKLVKEATDSNVKTLDAQKRSEDKRKEQEKLDAQELGKKLEELTVKVTGKAGEGGRLFGAISSKQVAQALEDQYKIKVDKRKLEMDAIRALGVTQIKVKLHNEVTVTLKVHVVEE.

A disordered region spans residues 44–63 (VKTLDAQKRSEDKRKEQEKL). Residues 48 to 63 (DAQKRSEDKRKEQEKL) are compositionally biased toward basic and acidic residues.

It belongs to the bacterial ribosomal protein bL9 family.

Functionally, binds to the 23S rRNA. The polypeptide is Large ribosomal subunit protein bL9 (Brevibacillus brevis (strain 47 / JCM 6285 / NBRC 100599)).